We begin with the raw amino-acid sequence, 185 residues long: Ribosome-recycling factor (185 aa).

Belongs to the RRF family.

It is found in the cytoplasm. In terms of biological role, responsible for the release of ribosomes from messenger RNA at the termination of protein biosynthesis. May increase the efficiency of translation by recycling ribosomes from one round of translation to another. The sequence is that of Ribosome-recycling factor from Clostridium botulinum (strain Eklund 17B / Type B).